Reading from the N-terminus, the 2130-residue chain is COPII coat assembly protein SEC16 (2130 aa).

Basic and acidic residues-rich tracts occupy residues 27–38 (KILEKEPEHEPS), 50–72 (DDVK…KDDL), and 88–97 (EAIKKNKLDP). 9 disordered regions span residues 27 to 516 (KILE…TQNK), 532 to 585 (FLED…NDAY), 598 to 647 (PAAR…ATMS), 810 to 842 (QGAQ…SSLI), 1347 to 1366 (DESK…SPAV), 1374 to 1519 (DITS…NNGS), 1558 to 1731 (PSIS…TPSD), 1753 to 1997 (DTET…LGEK), and 2014 to 2130 (IPLE…LDQK). Over residues 98 to 120 (QDQTAAGDSGRSQPDLSPRTTTG) the composition is skewed to polar residues. Basic and acidic residues-rich tracts occupy residues 128–138 (ETKDTDGHDSA), 149–170 (DDNR…KSEL), 178–188 (EADKEETKDFD), and 199–216 (KAGK…EAKI). 2 stretches are compositionally biased toward polar residues: residues 267 to 279 (WESN…SSQA) and 293 to 335 (APSS…PSSQ). The segment covering 380-395 (DFLKEIQKQEESKDTD) has biased composition (basic and acidic residues). Residues 405–420 (TPSAQPSSQDQDTSQD) are compositionally biased toward low complexity. Residues 421-431 (MRNYSTTQTDI) show a composition bias toward polar residues. Composition is skewed to basic and acidic residues over residues 447-481 (PKGE…HDFL) and 504-513 (ENKDSDKFET). The segment covering 538–568 (TSQTQTLKSKSNKQTYLPSTTNPSTTPVVPT) has biased composition (low complexity). The span at 601-617 (RSTNKYAPGSSNHNSPP) shows a compositional bias: polar residues. Polar residues-rich tracts occupy residues 1374-1388 (DITS…TSPQ), 1399-1420 (VTTN…NGMS), 1428-1498 (LYSN…QSEN), 1505-1519 (YSAN…NNGS), and 1559-1574 (SISN…SNPI). Over residues 1627 to 1640 (TESRESEKSSELRD) the composition is skewed to basic and acidic residues. Composition is skewed to polar residues over residues 1701–1714 (SGGN…SSDK) and 1722–1731 (TSMLVDTPSD). Basic and acidic residues predominate over residues 1753-1779 (DTETLHDRNEVKEAPNQESIDTKEEAS). Composition is skewed to polar residues over residues 1793–1803 (ASTSQSRNINV) and 1819–1839 (TSSL…NSFR). The span at 1840–1857 (TNEKESMFHPYQEGENKS) shows a compositional bias: basic and acidic residues. Residues 1896–1911 (SSRLSQSQQSALYQQY) are compositionally biased toward low complexity. Positions 1925-1935 (VDEEEDEDSED) are enriched in acidic residues. 2 stretches are compositionally biased toward basic and acidic residues: residues 1936–1963 (ESSK…KQRQ) and 1981–1997 (RKND…LGEK). Low complexity-rich tracts occupy residues 2039–2050 (SSSSISKPSSSS), 2061–2083 (APPA…RPSQ), and 2092–2104 (PSLA…DLLS).

It belongs to the SEC16 family.

The protein localises to the endoplasmic reticulum membrane. Involved in the initiation of assembly of the COPII coat required for the formation of transport vesicles from the endoplasmic reticulum (ER) and the selection of cargo molecules. Also involved in autophagy. This chain is COPII coat assembly protein SEC16 (SEC16), found in Debaryomyces hansenii (strain ATCC 36239 / CBS 767 / BCRC 21394 / JCM 1990 / NBRC 0083 / IGC 2968) (Yeast).